The primary structure comprises 496 residues: RNA-binding motif protein, Y chromosome, family 1 member E (496 aa).

One can recognise an RRM domain in the interval Gly-8–Lys-85. 2 disordered regions span residues Asp-67–Asp-348 and Asp-453–Tyr-496. Composition is skewed to low complexity over residues Pro-97–Gly-114 and Pro-149–Gly-159. The segment covering Asn-175–Met-184 has biased composition (polar residues). 6 stretches are compositionally biased toward basic and acidic residues: residues Arg-204–Gly-214, Asp-242–Ser-253, Ala-276–Tyr-289, Gly-313–Tyr-326, Ser-335–Asp-348, and Gly-484–Tyr-496.

In terms of assembly, interacts with splicing factor proteins SFRS3/SRP20, TRA2B/SFRS10, KHDRBS1/SAM68 and KHDRBS3. In terms of tissue distribution, testis-specific.

It is found in the nucleus. Its function is as follows. RNA-binding protein which may be involved in spermatogenesis. Required for sperm development, possibly by participating in pre-mRNA splicing in the testis. This is RNA-binding motif protein, Y chromosome, family 1 member E (RBMY1E) from Homo sapiens (Human).